The chain runs to 459 residues: Cysteine--tRNA ligase (459 aa).

Cys31 contacts Zn(2+). Residues 33-43 carry the 'HIGH' region motif; the sequence is PTVYYNPHIGN. Zn(2+) contacts are provided by Cys216, His241, and Glu245. Positions 274 to 278 match the 'KMSKS' region motif; sequence KMSKS. Lys277 is a binding site for ATP.

It belongs to the class-I aminoacyl-tRNA synthetase family. In terms of assembly, monomer. Zn(2+) serves as cofactor.

Its subcellular location is the cytoplasm. The enzyme catalyses tRNA(Cys) + L-cysteine + ATP = L-cysteinyl-tRNA(Cys) + AMP + diphosphate. The polypeptide is Cysteine--tRNA ligase (Rickettsia conorii (strain ATCC VR-613 / Malish 7)).